Here is an 800-residue protein sequence, read N- to C-terminus: Metabotropic glutamate receptor-like protein C (800 aa).

Positions 1-21 are cleaved as a signal peptide; the sequence is MKMKIIFLILILIFSINIIKC. The Extracellular segment spans residues 22 to 392; that stretch reads DKEFKMLTLL…EVEFSQSLQY (371 aa). 7 N-linked (GlcNAc...) asparagine glycosylation sites follow: Asn69, Asn107, Asn166, Asn258, Asn276, Asn302, and Asn345. Residues 393-413 traverse the membrane as a helical segment; sequence GFSITTGVLIAITIIMMLGIV. The Cytoplasmic segment spans residues 414–426; sequence RYKSTPSIRSASP. A helical transmembrane segment spans residues 427–447; the sequence is IFLNFILAGGIIVYIGIIVWV. Topologically, residues 448–463 are extracellular; it reads GPANDHQCNARLWLVT. A helical transmembrane segment spans residues 464–484; it reads LGFSTLIGSLVVKNFRIWLIF. Residues 485 to 499 are Cytoplasmic-facing; the sequence is DNPELKSISITNYQL. A helical membrane pass occupies residues 500–520; the sequence is FPWVGACLVINIILMSILTSV. Over 521–551 the chain is Extracellular; that stretch reads GDLREIDAQGIDSLGKYEFMKVCKMNSSGAS. Asn546 carries an N-linked (GlcNAc...) asparagine glycan. The chain crosses the membrane as a helical span at residues 552–572; it reads TLYTILAYFAALLLVGVFVSW. Topologically, residues 573–586 are cytoplasmic; it reads KIRIVDIQEFNESK. The helical transmembrane segment at 587-607 threads the bilayer; the sequence is AIANTLYAISFCLFVIVPLMI. Residues 608 to 616 lie on the Extracellular side of the membrane; that stretch reads SPQDKQSET. A helical membrane pass occupies residues 617-637; that stretch reads IVLCTAGLFITTAALLIIFTP. Over 638–800 the chain is Cytoplasmic; it reads KFWRVFTLGD…NDTEEEDKNQ (163 aa). 2 disordered regions span residues 658–694 and 718–800; these read QSNV…TETS and EFDD…DKNQ. Over residues 718–732 the composition is skewed to acidic residues; sequence EFDDNNIEQDNDNDN. The span at 733-774 shows a compositional bias: low complexity; that stretch reads DNNNNNNNNNNNNNNNNNNNNNNNNNNNNNNNNNNNNNNNNN. The span at 781-791 shows a compositional bias: basic and acidic residues; the sequence is NDEKVEEKQQN.

The protein in the N-terminal section; belongs to the BMP lipoprotein family. In the C-terminal section; belongs to the G-protein coupled receptor 3 family. GABA-B receptor subfamily.

Its subcellular location is the membrane. This chain is Metabotropic glutamate receptor-like protein C (grlC), found in Dictyostelium discoideum (Social amoeba).